A 238-amino-acid polypeptide reads, in one-letter code: Orotidine 5'-phosphate decarboxylase (238 aa).

Substrate-binding positions include D10, K32, 59-68 (DLKLHDIPNT), T122, R184, Q193, G213, and R214. K61 acts as the Proton donor in catalysis.

It belongs to the OMP decarboxylase family. Type 1 subfamily. Homodimer.

The catalysed reaction is orotidine 5'-phosphate + H(+) = UMP + CO2. It participates in pyrimidine metabolism; UMP biosynthesis via de novo pathway; UMP from orotate: step 2/2. Catalyzes the decarboxylation of orotidine 5'-monophosphate (OMP) to uridine 5'-monophosphate (UMP). This chain is Orotidine 5'-phosphate decarboxylase, found in Bacillus cereus (strain B4264).